The following is a 131-amino-acid chain: Pancreatic polypeptide prohormone (131 aa).

Residues 1-29 form the signal peptide; the sequence is MAAAHRCLFLLLLSTCVALLLQPPLGALG. Tyr-65 carries the post-translational modification Tyrosine amide.

This sequence belongs to the NPY family.

The protein resides in the secreted. Its function is as follows. Hormone secreted by pancreatic cells that acts as a regulator of pancreatic and gastrointestinal functions probably by signaling through the G protein-coupled receptor NPY4R2. This is Pancreatic polypeptide prohormone (PPY) from Bos taurus (Bovine).